The chain runs to 681 residues: Serine/threonine-protein kinase PAK 6 (681 aa).

Disordered stretches follow at residues 1 to 30, 149 to 169, 200 to 256, and 268 to 355; these read MFRK…DPKE, GGTP…PRVL, QSSP…ESSL, and TAAT…PRTW. Residues 12-25 enclose the CRIB domain; that stretch reads ISAPQNFQHRVHTS. Residues 26–406 form a linker region; sequence FDPKEGKFVG…VVDQGDPRLL (381 aa). Low complexity-rich tracts occupy residues 201–212 and 268–278; these read SSPPGASPPTGT and TAATAPPSSSK. Positions 308–333 are enriched in polar residues; that stretch reads SLPSDQPVGTFSPLTTSDTSSPQKSL. One can recognise a Protein kinase domain in the interval 407-658; sequence LDSYVKIGEG…AQELLDHPFL (252 aa). ATP is bound by residues 413–421 and lysine 436; that span reads IGEGSTGIV. Aspartate 526 (proton acceptor) is an active-site residue. Serine 560 carries the post-translational modification Phosphoserine; by autocatalysis.

It belongs to the protein kinase superfamily. STE Ser/Thr protein kinase family. STE20 subfamily. In terms of assembly, interacts tightly with GTP-bound but not GDP-bound CDC42/p21 and RAC1. Interacts with the androgen receptor AR and the estrogen receptor ESR1. Interacts with IQGAP1 and PPM1B. Post-translationally, autophosphorylated. Phosphorylated by MAP2K6//MAPKK6, leading to PAK6 activation. Selectively expressed in brain and testis, with lower levels in multiple tissues including prostate and breast.

Its subcellular location is the cytoplasm. The protein localises to the nucleus. The catalysed reaction is L-seryl-[protein] + ATP = O-phospho-L-seryl-[protein] + ADP + H(+). The enzyme catalyses L-threonyl-[protein] + ATP = O-phospho-L-threonyl-[protein] + ADP + H(+). Serine/threonine protein kinase that plays a role in the regulation of gene transcription. The kinase activity is induced by various effectors including AR or MAP2K6/MAPKK6. Phosphorylates the DNA-binding domain of androgen receptor/AR and thereby inhibits AR-mediated transcription. Also inhibits ESR1-mediated transcription. May play a role in cytoskeleton regulation by interacting with IQGAP1. May protect cells from apoptosis through phosphorylation of BAD. The polypeptide is Serine/threonine-protein kinase PAK 6 (PAK6) (Homo sapiens (Human)).